The chain runs to 166 residues: Putative methyltransferase Rv1506c (166 aa).

This sequence belongs to the methyltransferase superfamily.

Its function is as follows. Probably plays a role in host phagosome maturation arrest, as well as a role in the synthesis of acyltrehalose-containing glycolipids. The chain is Putative methyltransferase Rv1506c from Mycobacterium tuberculosis (strain ATCC 25618 / H37Rv).